A 185-amino-acid polypeptide reads, in one-letter code: Heavy metal-associated isoprenylated plant protein 11 (185 aa).

An HMA domain is found at 39-106 (QQNTNVVFKL…ICKHVAIIAA (68 aa)). The span at 109–158 (IREPEQNRNPVTRREPNREPEQNRSRVTRREPSREPEPNRAPLARRESRP) shows a compositional bias: basic and acidic residues. Positions 109–185 (IREPEQNRNP…GENSDGCIIM (77 aa)) are disordered. The residue at position 182 (Cys182) is a Cysteine methyl ester. Residue Cys182 is the site of S-farnesyl cysteine attachment. Positions 183–185 (IIM) are cleaved as a propeptide — removed in mature form.

Belongs to the HIPP family.

Probable heavy-metal-binding protein. This Arabidopsis thaliana (Mouse-ear cress) protein is Heavy metal-associated isoprenylated plant protein 11.